The sequence spans 2176 residues: Protein eyes shut (2176 aa).

The Cytoplasmic portion of the chain corresponds to 1–122 (MSNVHQFDTQ…NPNILLPTLR (122 aa)). The chain crosses the membrane as a helical span at residues 123–143 (ILARGLLLPALILAILVGSSQ). Residues 144–180 (AGFACLSNPCVFGVCIDGLNSSYSCYCIDGYTGIQCQ) form the EGF-like 1 domain. The Extracellular portion of the chain corresponds to 144-2176 (AGFACLSNPC…DLHGDEPLTV (2033 aa)). 21 cysteine pairs are disulfide-bonded: cysteine 148–cysteine 158, cysteine 153–cysteine 168, cysteine 170–cysteine 179, cysteine 186–cysteine 197, cysteine 191–cysteine 206, cysteine 208–cysteine 217, cysteine 224–cysteine 235, cysteine 229–cysteine 244, cysteine 246–cysteine 255, cysteine 262–cysteine 276, cysteine 270–cysteine 286, cysteine 288–cysteine 297, cysteine 304–cysteine 315, cysteine 309–cysteine 324, cysteine 326–cysteine 335, cysteine 342–cysteine 353, cysteine 347–cysteine 362, cysteine 364–cysteine 373, cysteine 380–cysteine 392, cysteine 386–cysteine 401, and cysteine 403–cysteine 412. Asparagine 163 carries an N-linked (GlcNAc...) asparagine glycan. The EGF-like 2; calcium-binding domain occupies 182-218 (NWDECWSSPCQNGGTCVDGVAYYNCTCPEGFSGSNCE). Asparagine 205 carries N-linked (GlcNAc...) asparagine glycosylation. Residues 220–256 (NVDECMSNPCQNGGLCRDRTNGYICTCQPGYLGSHCE) form the EGF-like 3; calcium-binding domain. One can recognise an EGF-like 4 domain in the interval 258–298 (DVAVCETGTGARCQHGGECIEGPGLEFTCDCPAGWHGRICQ). Residues 300–336 (EINECASSPCQNGGVCVDKLAAYACACPMGYTGINCE) enclose the EGF-like 5; calcium-binding domain. In terms of domain architecture, EGF-like 6 spans 338-374 (EILICADNPCQNNALCLMEEGVPTCYCVPDYHGEKCE). The EGF-like 7; calcium-binding domain occupies 376-413 (QYDECQLGPRCMNGGVCIDGVDTFSCSCPPLLTGMLCE). Asparagine 425 is a glycosylation site (N-linked (GlcNAc...) asparagine). Low complexity-rich tracts occupy residues 429–447 (PATQ…MAPP) and 482–502 (VTSV…VSVE). Disordered stretches follow at residues 429 to 465 (PATQ…SRAS), 482 to 639 (VTSV…RPTA), 757 to 783 (RFTT…LPTP), 802 to 854 (LITT…VEIT), and 902 to 1014 (APPA…GVPE). The segment covering 514-526 (GSHSISVEQTTAV) has biased composition (polar residues). Over residues 548–560 (SASESETETEEEI) the composition is skewed to acidic residues. Composition is skewed to low complexity over residues 564 to 582 (TTAR…ESPS) and 596 to 632 (TSAS…SEEV). Residues 757-775 (RFTTVQPPAGVTTTSPTED) are compositionally biased toward polar residues. Positions 811-820 (THHHHHHHPH) are enriched in basic residues. Pro residues-rich tracts occupy residues 904 to 922 (PATP…PSPP) and 930 to 955 (TLPP…PTPP). An EGF-like 8 domain is found at 1018–1054 (GDVDCIKLGCYNGGTCVTTSEGSRCVCRFDRQGPLCE). Intrachain disulfides connect cysteine 1022–cysteine 1033, cysteine 1027–cysteine 1042, and cysteine 1044–cysteine 1053. Residues 1059–1266 (IRNAAFSGDS…GITECGSLAC (208 aa)) form the Laminin G-like 1 domain. N-linked (GlcNAc...) asparagine glycosylation is found at asparagine 1165, asparagine 1170, and asparagine 1176. The 38-residue stretch at 1309–1346 (EISVCEDNPCQYGGTCVQFPGSGYLCLCPLGKHGHYCE) folds into the EGF-like 9 domain. 3 disulfide bridges follow: cysteine 1313–cysteine 1324, cysteine 1318–cysteine 1334, and cysteine 1336–cysteine 1345. Residues 1353–1549 (LPSFSGSVNG…GVGQCGTREC (197 aa)) form the Laminin G-like 2 domain. The N-linked (GlcNAc...) asparagine glycan is linked to asparagine 1471. EGF-like domains are found at residues 1545 to 1581 (GTRE…PLCA) and 1583 to 1621 (PTNP…KNCE). Intrachain disulfides connect cysteine 1549–cysteine 1560, cysteine 1554–cysteine 1569, cysteine 1571–cysteine 1580, cysteine 1587–cysteine 1600, cysteine 1594–cysteine 1609, and cysteine 1611–cysteine 1620. Residues asparagine 1665 and asparagine 1861 are each glycosylated (N-linked (GlcNAc...) asparagine). One can recognise a Laminin G-like 3 domain in the interval 1692–1879 (EKQRSFSPVP…NIRDCDGTAC (188 aa)). EGF-like domains lie at 1875-1912 (DGTA…DRCE) and 1913-1946 (YSET…FYCE). Intrachain disulfides connect cysteine 1879–cysteine 1890, cysteine 1884–cysteine 1900, cysteine 1902–cysteine 1911, cysteine 1917–cysteine 1928, cysteine 1922–cysteine 1934, and cysteine 1936–cysteine 1945. Residues 1952 to 2166 (PTTPSFRGNS…TYQGENIGSC (215 aa)) form the Laminin G-like 4 domain. 3 N-linked (GlcNAc...) asparagine glycosylation sites follow: asparagine 1994, asparagine 2035, and asparagine 2099. The disordered stretch occupies residues 2080-2101 (GGRSLGSTTPRSTLAGRRKNSS).

This sequence belongs to the EYS family. As to expression, expressed from the beginning of rhabdomere biogenesis (48 hours after pupal formation), when it decorates the entire photoreceptor apical surface.

The protein localises to the membrane. It localises to the secreted. Functionally, essential for the formation of matrix-filled interrhabdomeral space: critical for the formation of epithelial lumina in the retina. Acts together with prominin (prom) and the cell adhesion molecule chaoptin (chp) to choreograph the partitioning of rhabdomeres into an open system. This chain is Protein eyes shut, found in Drosophila melanogaster (Fruit fly).